The sequence spans 473 residues: JmjC domain-containing protein 4 (473 aa).

The JmjC domain occupies 140 to 433 (PTDGLLTDFS…DFDHPYLDRN (294 aa)). Positions 452–473 (TNKKNEKRPAEDDSPSQKKTCQ) are disordered.

Its subcellular location is the nucleus. Functionally, has a role in meiosis. The chain is JmjC domain-containing protein 4 (jmj4) from Schizosaccharomyces pombe (strain 972 / ATCC 24843) (Fission yeast).